The following is a 222-amino-acid chain: Putative O-methyltransferase MAV_1364 (222 aa).

Residues Val-49, Glu-71, 73–74 (GT), Ser-79, Asp-97, and Ile-98 contribute to the S-adenosyl-L-methionine site. Asp-145 serves as a coordination point for substrate. Residue Asp-147 coordinates S-adenosyl-L-methionine.

Belongs to the class I-like SAM-binding methyltransferase superfamily. Cation-dependent O-methyltransferase family.

The polypeptide is Putative O-methyltransferase MAV_1364 (Mycobacterium avium (strain 104)).